Here is a 210-residue protein sequence, read N- to C-terminus: Large ribosomal subunit protein uL3 (210 aa).

Residues 133 to 152 (ATHGNSLSHRVHGSTGQNQT) form a disordered region. Gln-151 carries the N5-methylglutamine modification.

Belongs to the universal ribosomal protein uL3 family. Part of the 50S ribosomal subunit. Forms a cluster with proteins L14 and L19. In terms of processing, methylated by PrmB.

Its function is as follows. One of the primary rRNA binding proteins, it binds directly near the 3'-end of the 23S rRNA, where it nucleates assembly of the 50S subunit. The polypeptide is Large ribosomal subunit protein uL3 (Francisella tularensis subsp. holarctica (strain FTNF002-00 / FTA)).